Consider the following 187-residue polypeptide: Peptide deformylase 1 (187 aa).

Fe cation contacts are provided by Cys-107 and His-149. Residue Glu-150 is part of the active site. His-153 lines the Fe cation pocket.

Belongs to the polypeptide deformylase family. Fe(2+) is required as a cofactor.

It carries out the reaction N-terminal N-formyl-L-methionyl-[peptide] + H2O = N-terminal L-methionyl-[peptide] + formate. Functionally, removes the formyl group from the N-terminal Met of newly synthesized proteins. Requires at least a dipeptide for an efficient rate of reaction. N-terminal L-methionine is a prerequisite for activity but the enzyme has broad specificity at other positions. In Nostoc sp. (strain PCC 7120 / SAG 25.82 / UTEX 2576), this protein is Peptide deformylase 1.